Reading from the N-terminus, the 391-residue chain is Phosphoglycerate kinase (391 aa).

Substrate-binding positions include 21-23, arginine 36, 59-62, arginine 113, and arginine 146; these read DLN and HLGR. ATP-binding positions include lysine 197, glutamate 319, and 345-348; that span reads GGDT.

Belongs to the phosphoglycerate kinase family. In terms of assembly, monomer.

It is found in the cytoplasm. The enzyme catalyses (2R)-3-phosphoglycerate + ATP = (2R)-3-phospho-glyceroyl phosphate + ADP. It participates in carbohydrate degradation; glycolysis; pyruvate from D-glyceraldehyde 3-phosphate: step 2/5. In Xylella fastidiosa (strain Temecula1 / ATCC 700964), this protein is Phosphoglycerate kinase.